The primary structure comprises 149 residues: D-aminoacyl-tRNA deacylase (149 aa).

The short motif at 137-138 (GP) is the Gly-cisPro motif, important for rejection of L-amino acids element.

The protein belongs to the DTD family. Homodimer.

The protein resides in the cytoplasm. The enzyme catalyses glycyl-tRNA(Ala) + H2O = tRNA(Ala) + glycine + H(+). It catalyses the reaction a D-aminoacyl-tRNA + H2O = a tRNA + a D-alpha-amino acid + H(+). An aminoacyl-tRNA editing enzyme that deacylates mischarged D-aminoacyl-tRNAs. Also deacylates mischarged glycyl-tRNA(Ala), protecting cells against glycine mischarging by AlaRS. Acts via tRNA-based rather than protein-based catalysis; rejects L-amino acids rather than detecting D-amino acids in the active site. By recycling D-aminoacyl-tRNA to D-amino acids and free tRNA molecules, this enzyme counteracts the toxicity associated with the formation of D-aminoacyl-tRNA entities in vivo and helps enforce protein L-homochirality. This Alkaliphilus metalliredigens (strain QYMF) protein is D-aminoacyl-tRNA deacylase.